Here is a 91-residue protein sequence, read N- to C-terminus: Probable Fe(2+)-trafficking protein (91 aa).

This sequence belongs to the Fe(2+)-trafficking protein family. Monomer.

Could be a mediator in iron transactions between iron acquisition and iron-requiring processes, such as synthesis and/or repair of Fe-S clusters in biosynthetic enzymes. This Escherichia coli O6:H1 (strain CFT073 / ATCC 700928 / UPEC) protein is Probable Fe(2+)-trafficking protein.